Consider the following 510-residue polypeptide: ATP synthase subunit alpha 1 (510 aa).

ATP is bound at residue 169–176 (GDRQTGKT).

It belongs to the ATPase alpha/beta chains family. In terms of assembly, F-type ATPases have 2 components, CF(1) - the catalytic core - and CF(0) - the membrane proton channel. CF(1) has five subunits: alpha(3), beta(3), gamma(1), delta(1), epsilon(1). CF(0) has three main subunits: a(1), b(2) and c(9-12). The alpha and beta chains form an alternating ring which encloses part of the gamma chain. CF(1) is attached to CF(0) by a central stalk formed by the gamma and epsilon chains, while a peripheral stalk is formed by the delta and b chains.

It is found in the cell inner membrane. It carries out the reaction ATP + H2O + 4 H(+)(in) = ADP + phosphate + 5 H(+)(out). Functionally, produces ATP from ADP in the presence of a proton gradient across the membrane. The alpha chain is a regulatory subunit. The polypeptide is ATP synthase subunit alpha 1 (Marinomonas sp. (strain MWYL1)).